A 448-amino-acid polypeptide reads, in one-letter code: Deoxyguanosinetriphosphate triphosphohydrolase-like protein (448 aa).

Positions 67-260 (RLTHSLEVSQ…MELADDIAYG (194 aa)) constitute an HD domain.

The protein belongs to the dGTPase family. Type 2 subfamily.

This chain is Deoxyguanosinetriphosphate triphosphohydrolase-like protein, found in Aliivibrio salmonicida (strain LFI1238) (Vibrio salmonicida (strain LFI1238)).